Reading from the N-terminus, the 172-residue chain is Translationally-controlled tumor protein homolog (172 aa).

Residues 1–172 (MIIYKDTVTE…FKDGLISEKC (172 aa)) enclose the TCTP domain.

It belongs to the TCTP family.

Its subcellular location is the cytoplasm. Involved in calcium binding and microtubule stabilization. The chain is Translationally-controlled tumor protein homolog (tpt1) from Xenopus tropicalis (Western clawed frog).